We begin with the raw amino-acid sequence, 836 residues long: MSTRKSPFFKKAEISLASPKAIEIWTERYFPNGQPINEVTSSETVNYKTLKPEPHGLFCQTIFGPVVDFTCACGKKATKLVKNKKFRGYCPKCGVERTSSRVRRYRLGLIKLKQPVAHSLYVSHRPSPLRLCLGWSTKRLQAVLKAVEFCYLPLIFTTFQSERECFSFFPKSFLLLRSQLTQKNEVFLEPRSSGFNENLSSSFFFKEKKRSKRKTGKVFPLRTSPRLFHKKHQKNRPRLVFNHGVIEARLYGIAYDATWPKVEEFQEFLFYLWEQSFFYESSIPYYAFAKGVKSYKEEIPKREQSYALQTGGLALQQILSHHDSSRFEYDLIYLSKKVSMILEILKENMASLNLDYEDDQKEYKKLLSKVKKLDLLLLKWKRQRELYRDFEVGKTQPAWMILNNLPVLPPGLRPITSIGGLVVASDINSFYRKIIIRNKRMSPRNNLGIFDTTLGGSWLSWCYNLRQVQEAVDELLRTGSVDAGRPLKSLLDGLKGKKGRFRQHLLGKRVDYSGRSVIVVGPKLKLHQCGLPKEMAVELFQPFIIQQLRLQGIVFTVTAAKVLIADRKPIVWSVLGEILKRHPVLLNRAPTLHRLGIQAFLPRLVEGKAILLHPLVCPAFNADFDGDQMAVHVPLSAKTRAEALSLLWSRNQLLAPSSGQPQHLPTQDMVLGFYYLTCSLEKTLKRVDSLVSSRKLFFQSSFFLKKKNEETLKNSIPQNLYFSEFSQVKTAYDIGNLTLHTPIWVKWTSCVQTFVPERHSRLKETLLETRLTFSGQRQTLFIDTCQFFSPSFFFGKKVRFIRTTPGRIFMHWCFFEANAEMSSTPTSKEKKSLEKK.

Zn(2+) is bound by residues C71, C73, C90, and C93. Residues D623, D625, and D627 each contribute to the Mg(2+) site.

The protein belongs to the RNA polymerase beta' chain family. RpoC1 subfamily. In plastids the minimal PEP RNA polymerase catalytic core is composed of four subunits: alpha, beta, beta', and beta''. When a (nuclear-encoded) sigma factor is associated with the core the holoenzyme is formed, which can initiate transcription. Mg(2+) serves as cofactor. It depends on Zn(2+) as a cofactor.

The protein resides in the plastid. The protein localises to the chloroplast. It catalyses the reaction RNA(n) + a ribonucleoside 5'-triphosphate = RNA(n+1) + diphosphate. In terms of biological role, DNA-dependent RNA polymerase catalyzes the transcription of DNA into RNA using the four ribonucleoside triphosphates as substrates. The polypeptide is DNA-directed RNA polymerase subunit beta' (rpoC1) (Chlorella vulgaris (Green alga)).